The primary structure comprises 611 residues: Elongation factor 4 (611 aa).

In terms of domain architecture, tr-type G spans 11-193 (KHIRNFSIVA…KIVKDVPAPT (183 aa)). Residues 23-28 (DHGKST) and 140-143 (NKID) contribute to the GTP site.

It belongs to the TRAFAC class translation factor GTPase superfamily. Classic translation factor GTPase family. LepA subfamily.

Its subcellular location is the cell membrane. It catalyses the reaction GTP + H2O = GDP + phosphate + H(+). Required for accurate and efficient protein synthesis under certain stress conditions. May act as a fidelity factor of the translation reaction, by catalyzing a one-codon backward translocation of tRNAs on improperly translocated ribosomes. Back-translocation proceeds from a post-translocation (POST) complex to a pre-translocation (PRE) complex, thus giving elongation factor G a second chance to translocate the tRNAs correctly. Binds to ribosomes in a GTP-dependent manner. This is Elongation factor 4 from Limosilactobacillus reuteri (strain DSM 20016) (Lactobacillus reuteri).